Here is a 570-residue protein sequence, read N- to C-terminus: Proline--tRNA ligase (570 aa).

The protein belongs to the class-II aminoacyl-tRNA synthetase family. ProS type 1 subfamily. In terms of assembly, homodimer.

The protein localises to the cytoplasm. It catalyses the reaction tRNA(Pro) + L-proline + ATP = L-prolyl-tRNA(Pro) + AMP + diphosphate. Its function is as follows. Catalyzes the attachment of proline to tRNA(Pro) in a two-step reaction: proline is first activated by ATP to form Pro-AMP and then transferred to the acceptor end of tRNA(Pro). As ProRS can inadvertently accommodate and process non-cognate amino acids such as alanine and cysteine, to avoid such errors it has two additional distinct editing activities against alanine. One activity is designated as 'pretransfer' editing and involves the tRNA(Pro)-independent hydrolysis of activated Ala-AMP. The other activity is designated 'posttransfer' editing and involves deacylation of mischarged Ala-tRNA(Pro). The misacylated Cys-tRNA(Pro) is not edited by ProRS. This Clostridium acetobutylicum (strain ATCC 824 / DSM 792 / JCM 1419 / IAM 19013 / LMG 5710 / NBRC 13948 / NRRL B-527 / VKM B-1787 / 2291 / W) protein is Proline--tRNA ligase.